Reading from the N-terminus, the 449-residue chain is Trigger factor (449 aa).

The 72-residue stretch at 160 to 231 (TDQVTIEELG…VQSVQTKQLQ (72 aa)) folds into the PPIase FKBP-type domain. Residues 411–449 (GQQVAGRQEAGAEQTAQAAEQESGQPQAEGEQAAEQRGE) form a disordered region. Positions 415–443 (AGRQEAGAEQTAQAAEQESGQPQAEGEQA) are enriched in low complexity.

This sequence belongs to the FKBP-type PPIase family. Tig subfamily.

Its subcellular location is the cytoplasm. The enzyme catalyses [protein]-peptidylproline (omega=180) = [protein]-peptidylproline (omega=0). Functionally, involved in protein export. Acts as a chaperone by maintaining the newly synthesized protein in an open conformation. Functions as a peptidyl-prolyl cis-trans isomerase. The protein is Trigger factor of Deinococcus geothermalis (strain DSM 11300 / CIP 105573 / AG-3a).